The primary structure comprises 287 residues: Festuclavine synthase II (287 aa).

The protein belongs to the fgaFS/easG family.

It carries out the reaction festuclavine + NAD(+) = 6,8-dimethyl-6,7-didehydroergoline + NADH + H(+). Its pathway is alkaloid biosynthesis; ergot alkaloid biosynthesis. Festuclavine synthase; part of the gene cluster that mediates the biosynthesis of isofumigaclavines, fungal ergot alkaloids. The tryptophan dimethylallyltransferase ifgA catalyzes the first step of ergot alkaloid biosynthesis by condensing dimethylallyl diphosphate (DMAP) and tryptophan to form 4-dimethylallyl-L-tryptophan. The second step is catalyzed by the methyltransferase ifgB that methylates 4-dimethylallyl-L-tryptophan in the presence of S-adenosyl-L-methionine, resulting in the formation of N-methyl-dimethylallyl-L-tryptophan. The catalase ifgD and the FAD-dependent oxidoreductase ifgC then transform N-methyl-dimethylallyl-L-tryptophan to chanoclavine-I which is further oxidized by ifgE in the presence of NAD(+), resulting in the formation of chanoclavine-I aldehyde. The chanoclavine-I aldehyde reductases ifgG and/or fgaOx3 reduce chanoclavine-I aldehyde to dihydrochanoclavine-I aldehyde that spontaneously dehydrates to form 6,8-dimethyl-6,7-didehydroergoline. The festuclavine dehydrogenases ifgF1 and/or ifgF2 then catalyze the reduction of 6,8-dimethyl-6,7-didehydroergoline to form festuclavine. Hydrolysis of festuclavine by a yet undetermined cytochrome P450 monooxygenase (called ifgH) then leads to the formation of isofumigaclavine B which is in turn acetylated by ifgI to isofumigaclavine A. Penicillium roqueforti has interestingly at least two sets of genes for the consumption of chanoclavine-I aldehyde on three different loci, the OYEs ifgG/fgaOx3 and the festuclavine synthase homologs ifgF1/ifgF2. The reason for the duplication of these genes is unclear, probably to ensure the conversion of chanoclavine-I aldehyde by differential gene expression under various environmental conditions. The protein is Festuclavine synthase II of Penicillium roqueforti (strain FM164).